The following is a 563-amino-acid chain: F-box/kelch-repeat protein At5g42350 (563 aa).

One can recognise an F-box domain in the interval 129-175 (YRKHVYLPDDILEMCLMRLPLTSLLNAHLVCKKWQSMANTQRFLQMR). Kelch repeat units follow at residues 184 to 231 (WLFL…SIHE), 232 to 282 (EIYI…ATEV), and 355 to 402 (VLIA…IICN).

This chain is F-box/kelch-repeat protein At5g42350, found in Arabidopsis thaliana (Mouse-ear cress).